Consider the following 311-residue polypeptide: Probable manganese-dependent inorganic pyrophosphatase (311 aa).

The Mn(2+) site is built by H9, D13, D15, D77, H99, and D151.

Belongs to the PPase class C family. The cofactor is Mn(2+).

The protein resides in the cytoplasm. It carries out the reaction diphosphate + H2O = 2 phosphate + H(+). In Streptococcus agalactiae serotype III (strain NEM316), this protein is Probable manganese-dependent inorganic pyrophosphatase.